A 948-amino-acid chain; its full sequence is Zinc finger CCCH domain-containing protein 3 (948 aa).

Disordered regions lie at residues 25–108 (HGNA…VPQQ), 121–219 (QNVV…RRTV), 265–296 (VDAGHTDQPVPSGSVGGPARPASGPRQAREAS), and 336–493 (NVCK…LKKT). Residues 56-74 (RPSRRGYSSHHGPSWRKKY) are compositionally biased toward basic residues. A compositionally biased stretch (low complexity) spans 128 to 141 (KPPSKSGSASASGA). Basic and acidic residues predominate over residues 157–166 (QRPREGEGEP). Residues 372–398 (SAPSKYKWKASSPSASSSSSFRWQSEA) are compositionally biased toward low complexity. The span at 405–415 (SQLSPVLSRSP) shows a compositional bias: polar residues. S408 carries the post-translational modification Phosphoserine. Positions 441-452 (VKSRTKIIRRRS) are enriched in basic residues. 5 C3H1-type zinc fingers span residues 667–695 (EKRKEYCMYYNRFGRCNRGERCPYIHDPE), 699–722 (VCTRFVRGTCKKTDGTCPFSHHVS), 723–749 (KEKMPVCSYFLKGICSNSNCPYSHVYV), 750–777 (SRKAEVCSDFLKGYCPLGAKCKKKHTLL), and 778–800 (CPDFARRGACPRGAQCQLLHRTQ). Disordered regions lie at residues 798-891 (RTQK…HEAP) and 913-948 (ISLQSSPSPGAQPRVRAPRAPLTKDSGKPLHIKPRL). Residues 834–846 (SASQRPTRQTPSS) are compositionally biased toward polar residues. Composition is skewed to low complexity over residues 847 to 856 (AALTAAAVAA) and 864 to 885 (SASPSSSKASSSSSSSSSPPAS). 2 positions are modified to phosphoserine: S918 and S920.

As to quaternary structure, interacts with SMAD1, SMAD3, SMAD4, CPSF2 and CPSF3.

The protein localises to the nucleus. Its function is as follows. Required for the export of polyadenylated mRNAs from the nucleus. Enhances ACVR1B-induced SMAD-dependent transcription. Binds to single-stranded DNA but not to double-stranded DNA in vitro. Involved in RNA cleavage. This chain is Zinc finger CCCH domain-containing protein 3 (ZC3H3), found in Homo sapiens (Human).